Here is a 150-residue protein sequence, read N- to C-terminus: Azurin (150 aa).

The N-terminal stretch at 1–21 (MFKQVLGGMALMAAFSAPVLA) is a signal peptide. The Plastocyanin-like domain maps to 22 to 150 (AECSVDIAGT…LMKGTLKLVD (129 aa)). Cysteines 24 and 47 form a disulfide. Positions 67, 133, 138, and 142 each coordinate Cu cation.

It is found in the periplasm. In Bordetella bronchiseptica (strain ATCC BAA-588 / NCTC 13252 / RB50) (Alcaligenes bronchisepticus), this protein is Azurin.